We begin with the raw amino-acid sequence, 595 residues long: Aspartate--tRNA(Asp/Asn) ligase (595 aa).

Residue E178 participates in L-aspartate binding. Residues 202-205 are aspartate; that stretch reads QLFK. R224 is a binding site for L-aspartate. ATP contacts are provided by residues 224-226 and Q233; that span reads RDE. Residue H458 coordinates L-aspartate. An ATP-binding site is contributed by E488. Position 495 (R495) interacts with L-aspartate. 540–543 contacts ATP; that stretch reads GLDR.

The protein belongs to the class-II aminoacyl-tRNA synthetase family. Type 1 subfamily. As to quaternary structure, homodimer.

It is found in the cytoplasm. It catalyses the reaction tRNA(Asx) + L-aspartate + ATP = L-aspartyl-tRNA(Asx) + AMP + diphosphate. Aspartyl-tRNA synthetase with relaxed tRNA specificity since it is able to aspartylate not only its cognate tRNA(Asp) but also tRNA(Asn). Reaction proceeds in two steps: L-aspartate is first activated by ATP to form Asp-AMP and then transferred to the acceptor end of tRNA(Asp/Asn). This Trichodesmium erythraeum (strain IMS101) protein is Aspartate--tRNA(Asp/Asn) ligase.